The following is a 591-amino-acid chain: V-type ATP synthase alpha chain (591 aa).

233 to 240 (GPFGAGKT) lines the ATP pocket.

It belongs to the ATPase alpha/beta chains family.

The catalysed reaction is ATP + H2O + 4 H(+)(in) = ADP + phosphate + 5 H(+)(out). Produces ATP from ADP in the presence of a proton gradient across the membrane. The V-type alpha chain is a catalytic subunit. The protein is V-type ATP synthase alpha chain of Streptococcus pneumoniae (strain Hungary19A-6).